A 307-amino-acid chain; its full sequence is Aspartate carbamoyltransferase catalytic subunit (307 aa).

Residues Arg58 and Thr59 each coordinate carbamoyl phosphate. Residue Lys86 coordinates L-aspartate. The carbamoyl phosphate site is built by Arg108, His138, and Gln141. Residues Arg171 and Arg223 each contribute to the L-aspartate site. Residues Ala264 and Pro265 each coordinate carbamoyl phosphate.

It belongs to the aspartate/ornithine carbamoyltransferase superfamily. ATCase family. As to quaternary structure, heterododecamer (2C3:3R2) of six catalytic PyrB chains organized as two trimers (C3), and six regulatory PyrI chains organized as three dimers (R2).

The enzyme catalyses carbamoyl phosphate + L-aspartate = N-carbamoyl-L-aspartate + phosphate + H(+). It participates in pyrimidine metabolism; UMP biosynthesis via de novo pathway; (S)-dihydroorotate from bicarbonate: step 2/3. In terms of biological role, catalyzes the condensation of carbamoyl phosphate and aspartate to form carbamoyl aspartate and inorganic phosphate, the committed step in the de novo pyrimidine nucleotide biosynthesis pathway. The sequence is that of Aspartate carbamoyltransferase catalytic subunit from Streptococcus suis (strain 98HAH33).